The primary structure comprises 241 residues: tRNA (guanine-N(7)-)-methyltransferase (241 aa).

Glu76, Glu101, Asp128, and Asp150 together coordinate S-adenosyl-L-methionine. Residue Asp150 is part of the active site. Substrate is bound by residues Lys154, Asp186, and 219–222 (TRYE).

The protein belongs to the class I-like SAM-binding methyltransferase superfamily. TrmB family.

The catalysed reaction is guanosine(46) in tRNA + S-adenosyl-L-methionine = N(7)-methylguanosine(46) in tRNA + S-adenosyl-L-homocysteine. Its pathway is tRNA modification; N(7)-methylguanine-tRNA biosynthesis. Catalyzes the formation of N(7)-methylguanine at position 46 (m7G46) in tRNA. This is tRNA (guanine-N(7)-)-methyltransferase from Cereibacter sphaeroides (strain ATCC 17023 / DSM 158 / JCM 6121 / CCUG 31486 / LMG 2827 / NBRC 12203 / NCIMB 8253 / ATH 2.4.1.) (Rhodobacter sphaeroides).